The primary structure comprises 153 residues: Regulatory protein RecX (153 aa).

It belongs to the RecX family.

It is found in the cytoplasm. Modulates RecA activity. In Syntrophotalea carbinolica (strain DSM 2380 / NBRC 103641 / GraBd1) (Pelobacter carbinolicus), this protein is Regulatory protein RecX.